Here is a 122-residue protein sequence, read N- to C-terminus: Large ribosomal subunit protein uL14 (122 aa).

This sequence belongs to the universal ribosomal protein uL14 family. In terms of assembly, part of the 50S ribosomal subunit. Forms a cluster with proteins L3 and L19. In the 70S ribosome, L14 and L19 interact and together make contacts with the 16S rRNA in bridges B5 and B8.

In terms of biological role, binds to 23S rRNA. Forms part of two intersubunit bridges in the 70S ribosome. The sequence is that of Large ribosomal subunit protein uL14 from Acinetobacter baylyi (strain ATCC 33305 / BD413 / ADP1).